The chain runs to 297 residues: Coiled-coil domain-containing protein 196 (297 aa).

Residues 83–117 adopt a coiled-coil conformation; it reads ESSVMELLKEAEEMKQNLERKNKMLRKEMEMLWNK. The segment at 122–161 is disordered; sequence EELSDQQKAPQTKNKADLQDGKAPKSPSSPRKTESELEKS. 2 stretches are compositionally biased toward basic and acidic residues: residues 135–144 and 152–161; these read NKADLQDGKA and RKTESELEKS.

This is Coiled-coil domain-containing protein 196 from Homo sapiens (Human).